The sequence spans 429 residues: Glycine betaine monooxygenase oxygenase subunit (429 aa).

A Rieske domain is found at 56–163 (WLIAGMTCEI…VKTAGGYIFI (108 aa)). Residues Cys98, His100, Cys118, and His121 each coordinate [2Fe-2S] cluster. His217 and His222 together coordinate Fe cation.

Belongs to the bacterial ring-hydroxylating dioxygenase alpha subunit family. As to quaternary structure, the system is composed of an oxygenase subunit (GbcA) and a reductase subunit (GbcB). The cofactor is [2Fe-2S] cluster. Requires Fe cation as cofactor.

It carries out the reaction glycine betaine + NADH + O2 + H(+) = N,N-dimethylglycine + formaldehyde + NAD(+) + H2O. Its function is as follows. Involved in degradation of glycine betaine. Part of a Rieske-type oxygenase system that catalyzes the conversion of glycine betaine (GB) to dimethylglycine (DMG). This subunit is the terminal oxygenase component of the system. In Pseudomonas aeruginosa (strain UCBPP-PA14), this protein is Glycine betaine monooxygenase oxygenase subunit.